We begin with the raw amino-acid sequence, 447 residues long: Argininosuccinate synthase (447 aa).

Residues 17–25 (AFSGGLDTS) and A43 contribute to the ATP site. Y99 contacts L-citrulline. G129 and T131 together coordinate ATP. L-aspartate-binding residues include T131, N135, and D136. Position 135 (N135) interacts with L-citrulline. Residue D136 coordinates ATP. L-citrulline contacts are provided by R139 and S192. D194 serves as a coordination point for ATP. T201, E203, and E280 together coordinate L-citrulline.

This sequence belongs to the argininosuccinate synthase family. Type 2 subfamily. Homotetramer.

It localises to the cytoplasm. It catalyses the reaction L-citrulline + L-aspartate + ATP = 2-(N(omega)-L-arginino)succinate + AMP + diphosphate + H(+). Its pathway is amino-acid biosynthesis; L-arginine biosynthesis; L-arginine from L-ornithine and carbamoyl phosphate: step 2/3. The polypeptide is Argininosuccinate synthase (Shigella boydii serotype 18 (strain CDC 3083-94 / BS512)).